A 361-amino-acid polypeptide reads, in one-letter code: P2Y purinoceptor 4 (361 aa).

The segment at 1-20 (MTSAESLLFTSLGPSPSSGD) is disordered. Residues 1-30 (MTSAESLLFTSLGPSPSSGDGDCRFNEEFK) lie on the Extracellular side of the membrane. Residues 31-58 (FILLPMSYAVVFVLGLALNAPTLWLFLF) traverse the membrane as a helical segment. Residues 59–68 (RLRPWDATAT) lie on the Cytoplasmic side of the membrane. Residues 69 to 91 (YMFHLALSDTLYVLSLPTLVYYY) traverse the membrane as a helical segment. At 92–108 (AARNHWPFGTGLCKFVR) the chain is on the extracellular side. A disulfide bridge connects residues C104 and C181. A helical membrane pass occupies residues 109–127 (FLFYWNLYCSVLFLTCISV). The Cytoplasmic segment spans residues 128-149 (HRYLGICHPLRAIRWGRPRFAS). A helical membrane pass occupies residues 150 to 170 (LLCLGVWLVVAGCLVPNLFFV). The Extracellular portion of the chain corresponds to 171 to 192 (TTNANGTTILCHDTTLPEEFDH). N175 is a glycosylation site (N-linked (GlcNAc...) asparagine). A helical membrane pass occupies residues 193 to 218 (YVYFSSAVMVLLFGLPFLITLVCYGL). The Cytoplasmic segment spans residues 219-242 (MARRLYRPLPGAGQSSSRLRSLRT). Residues 243–265 (IAVVLTVFAVCFVPFHITRTIYY) traverse the membrane as a helical segment. Residues 266–283 (QARLLQADCHVLNIVNVV) lie on the Extracellular side of the membrane. Residues 284-305 (YKVTRPLASANSCLDPVLYLFT) traverse the membrane as a helical segment. Topologically, residues 306 to 361 (GDKYRNQLQQLCRGSKPKPRTAASSLALVTLHEESISRWADTHQDSTFSAYEGDRL) are cytoplasmic.

This sequence belongs to the G-protein coupled receptor 1 family. In terms of processing, phosphorylation of Ser-329 and Ser-330 is a key step in agonist-dependent desensitization and loss of surface P2RY4. This phosphorylation does not involve PKC, nor other calcium-activated kinases. Widely expressed at low levels. In brain, higher expression in the pineal gland and ventricular system.

It is found in the cell membrane. Its function is as follows. Receptor for ATP and UTP coupled to G-proteins that activate a phosphatidylinositol-calcium second messenger system. Not activated by ADP or UDP. The sequence is that of P2Y purinoceptor 4 (P2ry4) from Rattus norvegicus (Rat).